A 746-amino-acid polypeptide reads, in one-letter code: Exostosin-1 (746 aa).

Residues 1–7 (MQAKKRY) lie on the Cytoplasmic side of the membrane. The helical; Signal-anchor for type II membrane protein transmembrane segment at 8–28 (FILLSAGSCLALLFYFGGLQF) threads the bilayer. Topologically, residues 29-746 (RASRSHSRRE…RKKYRDIERL (718 aa)) are lumenal. A glycan (N-linked (GlcNAc...) asparagine) is linked at Asn89. Disulfide bonds link Cys98-Cys103 and Cys109-Cys152. Residues Leu166 and Tyr203 each contribute to the a protein site. Positions 267, 269, 271, and 280 each coordinate UDP. A disulfide bridge connects residues Cys298 and Cys312. His300 contributes to the a protein binding site. UDP-binding residues include Tyr319 and Tyr324. A glycan (N-linked (GlcNAc...) asparagine) is linked at Asn330. 2 disulfide bridges follow: Cys334/Cys355 and Cys652/Cys704. Positions 346 and 349 each coordinate UDP.

This sequence belongs to the glycosyltransferase 47 family. As to quaternary structure, part of the heparan sulfate polymerase, a dimeric complex composed of EXT1 and EXT2. Could also form homooligomeric complexes. Interacts with NDST1. Post-translationally, N-glycosylated.

It is found in the golgi apparatus membrane. The protein localises to the golgi apparatus. It localises to the cis-Golgi network membrane. The protein resides in the endoplasmic reticulum membrane. The enzyme catalyses 3-O-{alpha-D-GlcNAc-[(1-&gt;4)-beta-D-GlcA-(1-&gt;4)-alpha-D-GlcNAc](n)-(1-&gt;4)-beta-D-GlcA-(1-&gt;3)-beta-D-Gal-(1-&gt;3)-beta-D-Gal-(1-&gt;4)-beta-D-Xyl}-L-seryl-[protein] + UDP-alpha-D-glucuronate = 3-O-{[(1-&gt;4)-beta-D-GlcA-(1-&gt;4)-alpha-D-GlcNAc](n+1)-(1-&gt;4)-beta-D-GlcA-(1-&gt;3)-beta-D-Gal-(1-&gt;3)-beta-D-Gal-(1-&gt;4)-beta-D-Xyl}-L-seryl-[protein] + UDP + H(+). Its pathway is protein modification; protein glycosylation. Glycosyltransferase forming with EXT2 the heterodimeric heparan sulfate polymerase which catalyzes the elongation of the heparan sulfate glycan backbone. Glycan backbone extension consists in the alternating transfer of (1-&gt;4)-beta-D-GlcA and (1-&gt;4)-alpha-D-GlcNAc residues from their respective UDP-sugar donors. Both EXT1 and EXT2 are required for the full activity of the polymerase since EXT1 bears the N-acetylglucosaminyl-proteoglycan 4-beta-glucuronosyltransferase activity within the complex while EXT2 carries the glucuronosyl-N-acetylglucosaminyl-proteoglycan 4-alpha-N-acetylglucosaminyltransferase activity. Heparan sulfate proteoglycans are ubiquitous components of the extracellular matrix and play an important role in tissue homeostasis and signaling. The protein is Exostosin-1 (EXT1) of Bos taurus (Bovine).